Reading from the N-terminus, the 241-residue chain is ATP synthase subunit a (241 aa).

5 consecutive transmembrane segments (helical) span residues 30–50 (GQVFMTSWIVIGAILALVVVG), 91–111 (FIGTLFLFIFVSNWGGSLVPW), 128–148 (INTTVALALLVSLSYFYAGLS), 193–213 (LVVAVLVFLVPLFLPVPVMFL), and 214–234 (GLFTSAIQALIFATLAAYYIG).

Belongs to the ATPase A chain family. As to quaternary structure, F-type ATPases have 2 components, CF(1) - the catalytic core - and CF(0) - the membrane proton channel. CF(1) has five subunits: alpha(3), beta(3), gamma(1), delta(1), epsilon(1). CF(0) has four main subunits: a, b, b' and c.

The protein resides in the cellular thylakoid membrane. Functionally, key component of the proton channel; it plays a direct role in the translocation of protons across the membrane. In Prochlorococcus marinus (strain MIT 9313), this protein is ATP synthase subunit a.